The chain runs to 135 residues: Ribosome-binding factor A (135 aa).

It belongs to the RbfA family. As to quaternary structure, monomer. Binds 30S ribosomal subunits, but not 50S ribosomal subunits or 70S ribosomes.

The protein resides in the cytoplasm. One of several proteins that assist in the late maturation steps of the functional core of the 30S ribosomal subunit. Associates with free 30S ribosomal subunits (but not with 30S subunits that are part of 70S ribosomes or polysomes). Required for efficient processing of 16S rRNA. May interact with the 5'-terminal helix region of 16S rRNA. The chain is Ribosome-binding factor A from Hyphomonas neptunium (strain ATCC 15444).